Reading from the N-terminus, the 506-residue chain is Glycine--tRNA ligase (506 aa).

Substrate-binding residues include Arg-99 and Glu-189. Residues 221–223 (RNE), 231–236 (FRVREF), 305–306 (EL), and 364–367 (GVDR) contribute to the ATP site. A substrate-binding site is contributed by 236 to 240 (FEQME). 360-364 (EPSAG) provides a ligand contact to substrate.

It belongs to the class-II aminoacyl-tRNA synthetase family. Homodimer.

The protein resides in the cytoplasm. The enzyme catalyses tRNA(Gly) + glycine + ATP = glycyl-tRNA(Gly) + AMP + diphosphate. In terms of biological role, catalyzes the attachment of glycine to tRNA(Gly). This is Glycine--tRNA ligase from Thermus thermophilus (strain ATCC BAA-163 / DSM 7039 / HB27).